Consider the following 498-residue polypeptide: Alpha-amylase A (498 aa).

A signal peptide spans 1 to 21; sequence MMVAWWSLFLYGLQVAAPALA. A disulfide bridge connects residues Cys51 and Cys59. Positions 56 and 104 each coordinate substrate. Ca(2+) is bound at residue Asn142. His143 is a substrate binding site. Cysteines 171 and 185 form a disulfide. Ca(2+) is bound by residues Glu183 and Asp196. The N-linked (GlcNAc...) asparagine glycan is linked to Asn218. A substrate-binding site is contributed by Arg225. 3 residues coordinate Ca(2+): Asp227, His231, and Glu251. The active-site Nucleophile is Asp227. 230 to 231 provides a ligand contact to substrate; that stretch reads KH. Residue Glu251 is the Proton donor of the active site. Gly255 provides a ligand contact to substrate. An intrachain disulfide couples Cys261 to Cys304. Substrate-binding residues include Asp318 and Arg365. The cysteines at positions 461 and 496 are disulfide-linked.

The protein belongs to the glycosyl hydrolase 13 family. It depends on Ca(2+) as a cofactor.

It carries out the reaction Endohydrolysis of (1-&gt;4)-alpha-D-glucosidic linkages in polysaccharides containing three or more (1-&gt;4)-alpha-linked D-glucose units.. This is Alpha-amylase A (amyA) from Aspergillus awamori (Black koji mold).